Consider the following 215-residue polypeptide: Pyridoxine/pyridoxamine 5'-phosphate oxidase (215 aa).

Substrate contacts are provided by residues 9–12 (RRDY) and Lys-69. Residues 64 to 69 (RILLLK), 79 to 80 (FT), Lys-86, and Gln-108 contribute to the FMN site. Residues Tyr-126, Arg-130, and Ser-134 each coordinate substrate. Residues 143–144 (QS) and Trp-188 each bind FMN. 194-196 (RLH) contributes to the substrate binding site. Arg-198 contributes to the FMN binding site.

It belongs to the pyridoxamine 5'-phosphate oxidase family. In terms of assembly, homodimer. FMN is required as a cofactor.

It carries out the reaction pyridoxamine 5'-phosphate + O2 + H2O = pyridoxal 5'-phosphate + H2O2 + NH4(+). It catalyses the reaction pyridoxine 5'-phosphate + O2 = pyridoxal 5'-phosphate + H2O2. Its pathway is cofactor metabolism; pyridoxal 5'-phosphate salvage; pyridoxal 5'-phosphate from pyridoxamine 5'-phosphate: step 1/1. It participates in cofactor metabolism; pyridoxal 5'-phosphate salvage; pyridoxal 5'-phosphate from pyridoxine 5'-phosphate: step 1/1. Functionally, catalyzes the oxidation of either pyridoxine 5'-phosphate (PNP) or pyridoxamine 5'-phosphate (PMP) into pyridoxal 5'-phosphate (PLP). This is Pyridoxine/pyridoxamine 5'-phosphate oxidase from Pseudomonas fluorescens (strain SBW25).